Consider the following 149-residue polypeptide: H/ACA ribonucleoprotein complex subunit 2-like protein (149 aa).

The protein belongs to the eukaryotic ribosomal protein eL8 family. As to quaternary structure, component of the small nucleolar ribonucleoprotein particle containing H/ACA-type snoRNAs (H/ACA snoRNPs). Component of the telomerase holoenzyme complex.

The protein resides in the nucleus. Its subcellular location is the nucleolus. In terms of biological role, required for ribosome biogenesis. Part of a complex which catalyzes pseudouridylation of rRNA. This involves the isomerization of uridine such that the ribose is subsequently attached to C5, instead of the normal N1. Pseudouridine ('psi') residues may serve to stabilize the conformation of rRNAs. The protein is H/ACA ribonucleoprotein complex subunit 2-like protein (nhp2) of Xenopus laevis (African clawed frog).